Consider the following 260-residue polypeptide: Cytosolic Fe-S cluster assembly factor Nubp2 homolog (260 aa).

An ATP-binding site is contributed by 14–21 (GKGGVGKS). C188 and C191 together coordinate [4Fe-4S] cluster.

It belongs to the Mrp/NBP35 ATP-binding proteins family. NUBP2/CFD1 subfamily. Heterotetramer of 2 Nubp1 and 2 Nubp2 chains. The cofactor is [4Fe-4S] cluster.

Its subcellular location is the cytoplasm. Component of the cytosolic iron-sulfur (Fe/S) protein assembly (CIA) machinery. Required for maturation of extramitochondrial Fe-S proteins. The Nubp1-Nubp2 heterotetramer forms a Fe-S scaffold complex, mediating the de novo assembly of an Fe-S cluster and its transfer to target apoproteins. This chain is Cytosolic Fe-S cluster assembly factor Nubp2 homolog, found in Drosophila simulans (Fruit fly).